The following is a 116-amino-acid chain: Nicotine metabolites export pump subunit NepA (116 aa).

A run of 4 helical transmembrane segments spans residues 10 to 30, 42 to 62, 67 to 87, and 92 to 112; these read LTIW…TSLL, TVAV…ILKF, IAYA…GVLF, and FSWK…TLNL.

Belongs to the drug/metabolite transporter (DMT) superfamily. Small multidrug resistance (SMR) (TC 2.A.7.1) family. NepA/NepB subfamily. As to quaternary structure, the efflux pump is composed of NepA and NepB.

It localises to the cell membrane. Component of an efflux pump responsible for the transport of nicotine breakdown products, in particular methylamine, out of the cell. This pump apparently serves as a metabolic valve for nicotine catabolites and may protect the bacteria from the potentially toxic side effects of these compounds. The protein is Nicotine metabolites export pump subunit NepA (nepA) of Paenarthrobacter nicotinovorans (Arthrobacter nicotinovorans).